The following is a 737-amino-acid chain: Elongation factor 2 (737 aa).

A tr-type G domain is found at 18-262; sequence TRVRNIGIIA…TVIKFVPNPR (245 aa). GTP is bound by residues 27–34, 93–97, and 147–150; these read AHVDHGKT, DTPGH, and NKVD. Position 604 is a diphthamide (His604).

Belongs to the TRAFAC class translation factor GTPase superfamily. Classic translation factor GTPase family. EF-G/EF-2 subfamily.

It is found in the cytoplasm. Functionally, catalyzes the GTP-dependent ribosomal translocation step during translation elongation. During this step, the ribosome changes from the pre-translocational (PRE) to the post-translocational (POST) state as the newly formed A-site-bound peptidyl-tRNA and P-site-bound deacylated tRNA move to the P and E sites, respectively. Catalyzes the coordinated movement of the two tRNA molecules, the mRNA and conformational changes in the ribosome. The sequence is that of Elongation factor 2 (fusA) from Sulfurisphaera tokodaii (strain DSM 16993 / JCM 10545 / NBRC 100140 / 7) (Sulfolobus tokodaii).